Consider the following 431-residue polypeptide: Teosinte glume architecture 1 (431 aa).

Disordered stretches follow at residues 18 to 55 (QDHA…GAPA) and 68 to 102 (ECEP…QQCP). Low complexity predominate over residues 21-41 (AAAAPSSGGHAANAAAAGTGT). The SBP-type zinc finger occupies 101 to 178 (CPSCAVDGCR…DGHNRRRRKP (78 aa)). Zn(2+) is bound by residues C104, C109, C126, H129, C145, C148, H152, and C164. The span at 408 to 419 (GGGSGGGEGSSD) shows a compositional bias: gly residues. The interval 408–431 (GGGSGGGEGSSDGGTSSSMPFSWQ) is disordered.

Monomer and homodimer. As to expression, strongly expressed in immature ears and weakly in husks. Found in the inflorescence meristem of the developing ear, in the spikelet pair primordia, the glume primordia, the cupule forming region and other floral organs. Not detected in other tissues.

Its function is as follows. SBP transcriptional regulator probably involved in the domestication of maize. Acts as a transcriptional repressor binding to a 5'-GTAC-3' motif. May repress the growth of lateral branches in length and numbers. The polypeptide is Teosinte glume architecture 1 (Zea mays (Maize)).